A 489-amino-acid polypeptide reads, in one-letter code: Betaine aldehyde dehydrogenase (489 aa).

K(+) contacts are provided by Thr-26 and Asp-93. 150-152 contacts NAD(+); sequence GAW. Lys-162 functions as the Charge relay system in the catalytic mechanism. NAD(+) is bound at residue 176-179; that stretch reads KPSE. Val-180 is a K(+) binding site. Residue 229-232 coordinates NAD(+); that stretch reads GVET. Leu-245 provides a ligand contact to K(+). Glu-251 functions as the Proton acceptor in the catalytic mechanism. Residues Gly-253, Cys-285, and Glu-386 each coordinate NAD(+). The active-site Nucleophile is Cys-285. At Cys-285 the chain carries Cysteine sulfenic acid (-SOH). K(+) is bound by residues Lys-456 and Gly-459. Catalysis depends on Glu-463, which acts as the Charge relay system.

Belongs to the aldehyde dehydrogenase family. Dimer of dimers. K(+) serves as cofactor.

It carries out the reaction betaine aldehyde + NAD(+) + H2O = glycine betaine + NADH + 2 H(+). The protein operates within amine and polyamine biosynthesis; betaine biosynthesis via choline pathway; betaine from betaine aldehyde: step 1/1. In terms of biological role, involved in the biosynthesis of the osmoprotectant glycine betaine. Catalyzes the irreversible oxidation of betaine aldehyde to the corresponding acid. The sequence is that of Betaine aldehyde dehydrogenase from Burkholderia ambifaria (strain MC40-6).